The primary structure comprises 111 residues: uncharacterized protein (111 aa).

To M.tuberculosis Rv1271c.

This is an uncharacterized protein from Mycobacterium bovis (strain ATCC BAA-935 / AF2122/97).